The primary structure comprises 137 residues: Phospholipase A2 group V (137 aa).

The signal sequence occupies residues 1-20 (MKRLLTLAWFLACSVPAVPG). Disulfide bonds link Cys46/Cys137, Cys48/Cys64, Cys63/Cys117, Cys70/Cys110, Cys79/Cys103, and Cys97/Cys108. The Ca(2+) site is built by Tyr47, Gly49, and Gly51. His67 is a catalytic residue. Residue Asp68 participates in Ca(2+) binding. Asp111 is an active-site residue.

Belongs to the phospholipase A2 family. Requires Ca(2+) as cofactor. Post-translationally, this enzyme lacks one of the seven disulfide bonds found in similar PA2 proteins.

It is found in the secreted. It localises to the cell membrane. The protein localises to the cytoplasmic vesicle. Its subcellular location is the phagosome. The protein resides in the recycling endosome. It is found in the golgi apparatus. It localises to the cis-Golgi network. The protein localises to the trans-Golgi network. The catalysed reaction is a 1,2-diacyl-sn-glycero-3-phosphocholine + H2O = a 1-acyl-sn-glycero-3-phosphocholine + a fatty acid + H(+). The enzyme catalyses 1-hexadecanoyl-2-(9Z-octadecenoyl)-sn-glycero-3-phosphocholine + H2O = 1-hexadecanoyl-sn-glycero-3-phosphocholine + (9Z)-octadecenoate + H(+). It carries out the reaction 1-hexadecanoyl-2-(5Z,8Z,11Z,14Z-eicosatetraenoyl)-sn-glycero-3-phosphocholine + H2O = 1-hexadecanoyl-sn-glycero-3-phosphocholine + (5Z,8Z,11Z,14Z)-eicosatetraenoate + H(+). It catalyses the reaction 1-hexadecanoyl-2-(9Z,12Z-octadecadienoyl)-sn-glycero-3-phosphoethanolamine + H2O = 1-hexadecanoyl-sn-glycero-3-phosphoethanolamine + (9Z,12Z)-octadecadienoate + H(+). The catalysed reaction is 1-hexadecanoyl-2-(5Z,8Z,11Z,14Z-eicosatetraenoyl)-sn-glycero-3-phosphoethanolamine + H2O = 1-hexadecanoyl-sn-glycero-3-phosphoethanolamine + (5Z,8Z,11Z,14Z)-eicosatetraenoate + H(+). The enzyme catalyses 1-octadecanoyl-2-(5Z,8Z,11Z,14Z-eicosatetraenoyl)-sn-glycero-3-phospho-(1D-myo-inositol) + H2O = 1-octadecanoyl-sn-glycero-3-phospho-(1D-myo-inositol) + (5Z,8Z,11Z,14Z)-eicosatetraenoate + H(+). It carries out the reaction 1-hexadecanoyl-2-(9Z-octadecenoyl)-sn-glycero-3-phosphoglycerol + H2O = 1-hexadecanoyl-sn-glycero-3-phosphoglycerol + (9Z)-octadecenoate + H(+). It catalyses the reaction N-hexadecanoyl-1,2-di-(9Z-octadecenoyl)-sn-glycero-3-phosphoethanolamine + H2O = N-hexadecanoyl-1-(9Z-octadecenoyl)-sn-glycero-3-phosphoethanolamine + (9Z)-octadecenoate + H(+). The catalysed reaction is 1'-[1,2-di-(9Z-octadecenoyl)-sn-glycero-3-phospho]-3'-[1-(9Z-octadecenoyl)-sn-glycero-3-phospho]-glycerol + H2O = 1',3'-bis-[1-(9Z-octadecenoyl)-sn-glycero-3-phospho]-glycerol + (9Z)-octadecenoate + H(+). The enzyme catalyses 1',3'-bis[1,2-di-(9Z-octadecenoyl)-sn-glycero-3-phospho]-glycerol + H2O = 1'-[1,2-di-(9Z-octadecenoyl)-sn-glycero-3-phospho]-3'-[1-(9Z-octadecenoyl)-sn-glycero-3-phospho]-glycerol + (9Z)-octadecenoate + H(+). It functions in the pathway lipid metabolism; phospholipid metabolism. The protein operates within lipid metabolism; leukotriene B4 biosynthesis. Its pathway is lipid metabolism; leukotriene C4 biosynthesis. Functionally, secretory calcium-dependent phospholipase A2 that primarily targets extracellular phospholipids. Hydrolyzes the ester bond of the fatty acyl group attached at sn-2 position of phospholipids (phospholipase A2 activity), preferentially releasing fatty acyl groups with a low degree of unsaturation such as oleoyl (C18:1) and linoleoyl (C18:2) groups. Hydrolyzes low-density lipoprotein (LDL) phospholipids releasing unsaturated fatty acids that drive macrophage polarization toward an M2 phenotype. May act in an autocrine and paracrine manner. Contributes to lipid remodeling of cellular membranes at different subcellular locations and generation of lipid mediators involved in pathogen clearance. Cleaves sn-2 fatty acyl chains of cardiolipin, a major component of the inner membrane of mitochondria and bacterial membranes. Promotes phagocytosis of bacteria in macrophages through production of lysophosphatidylethanolamines. Displays bactericidal activity against Gram-positive bacteria by directly hydrolyzing phospholipids of the bacterial membrane. Promotes phagocytosis and killing of ingested fungi likely through controlling phagosome-lysosome fusion and phagosome maturation. Plays a role in biosynthesis of cysteinyl leukotrienes (CysLTs) in myeloid cells. In eosinophils, triggers perinuclear arachidonate release and LTC4 synthesis in a PLA2G4A-independent way. In neutrophils, amplifies CysLTs biosynthesis initiated by PLA2G4A. Promotes immune complex clearance in macrophages via stimulating synthesis of CysLTs, which act through CYSLTR1 to trigger phagocytosis. May regulate antigen processing in antigen-presenting cells. In pulmonary macrophages regulates IL33 production required for activation of group 2 innate lymphoid cells. May play a role in the biosynthesis of N-acyl ethanolamines that regulate energy metabolism. Hydrolyzes N-acyl phosphatidylethanolamines to N-acyl lysophosphatidylethanolamines, which are further cleaved by a lysophospholipase D to release N-acyl ethanolamines. The sequence is that of Phospholipase A2 group V (Pla2g5) from Rattus norvegicus (Rat).